A 131-amino-acid polypeptide reads, in one-letter code: Profilin-6 (131 aa).

Belongs to the profilin family. In terms of assembly, occurs in many kinds of cells as a complex with monomeric actin in a 1:1 ratio.

The protein localises to the cytoplasm. It is found in the cytoskeleton. Its function is as follows. Binds to actin and affects the structure of the cytoskeleton. At high concentrations, profilin prevents the polymerization of actin, whereas it enhances it at low concentrations. By binding to PIP2, it inhibits the formation of IP3 and DG. This Hevea brasiliensis (Para rubber tree) protein is Profilin-6.